The sequence spans 178 residues: Ribosome maturation factor RimM (178 aa).

In terms of domain architecture, PRC barrel spans 101–178; it reads ADEYYWYQLV…VMRVEWDADF (78 aa).

This sequence belongs to the RimM family. As to quaternary structure, binds ribosomal protein uS19.

The protein resides in the cytoplasm. Its function is as follows. An accessory protein needed during the final step in the assembly of 30S ribosomal subunit, possibly for assembly of the head region. Essential for efficient processing of 16S rRNA. May be needed both before and after RbfA during the maturation of 16S rRNA. It has affinity for free ribosomal 30S subunits but not for 70S ribosomes. In Pseudomonas putida (strain GB-1), this protein is Ribosome maturation factor RimM.